A 542-amino-acid polypeptide reads, in one-letter code: 4-coumarate--CoA ligase-like 1 (542 aa).

Positions 189, 190, 191, 192, 193, and 197 each coordinate ATP. Tyrosine 237 lines the (E)-4-coumaroyl-AMP pocket. Residue arginine 258 participates in CoA binding. The segment at 260–331 (DLRIFLNALI…AKFPNVQVQE (72 aa)) is SBD1. (E)-4-coumaroyl-AMP is bound by residues alanine 309, glutamate 331, alanine 332, and threonine 336. Glutamate 331, alanine 332, threonine 336, aspartate 420, and arginine 435 together coordinate ATP. The interval 332–399 (AYGLTEHSCI…VRSQCVMQGY (68 aa)) is SBD2. The (E)-4-coumaroyl-AMP site is built by lysine 437 and lysine 441. Lysine 443 and glycine 444 together coordinate CoA. Lysine 526 serves as a coordination point for ATP.

The protein belongs to the ATP-dependent AMP-binding enzyme family. In terms of assembly, interacts with TKPR1, PKSA and PKSB. Mg(2+) serves as cofactor. In terms of tissue distribution, mostly confined to anther tapetal cells.

It is found in the endoplasmic reticulum. The catalysed reaction is (E)-4-coumarate + ATP + CoA = (E)-4-coumaroyl-CoA + AMP + diphosphate. It catalyses the reaction (E)-4-coumarate + ATP + H(+) = (E)-4-coumaroyl-AMP + diphosphate. The enzyme catalyses (E)-4-coumaroyl-AMP + CoA = (E)-4-coumaroyl-CoA + AMP + H(+). Functionally, carboxylate--CoA ligase that may use 4-coumarate as substrate. Follows a two-step reaction mechanism, wherein the carboxylate substrate first undergoes adenylation by ATP, followed by a thioesterification in the presence of CoA to yield the final CoA thioester. This chain is 4-coumarate--CoA ligase-like 1, found in Arabidopsis thaliana (Mouse-ear cress).